Reading from the N-terminus, the 316-residue chain is MGMGMRRERDAEAELNLPPGFRFHPTDDELVEHYLCRKAAGQRLPVPIIAEVDLYKFDPWDLPERALFGAREWYFFTPRDRKYPNGSRPNRAAGNGYWKATGADKPVAPRGRTLGIKKALVFYAGKAPRGVKTDWIMHEYRLADAGRAAAGAKKGSLRLDDWVLCRLYNKKNEWEKMQQGKEVKEEASDMVTSQSHSHTHSWGETRTPESEIVDNDPFPELDSFPAFQPAPPPATAMMVPKKESMDDATAAAAAAATIPRNNSSLFVDLSYDDIQGMYSGLDMLPPGDDFYSSLFASPRVKGTTPRAGAGMGMVPF.

An NAC domain is found at 17–170; that stretch reads LPPGFRFHPT…DWVLCRLYNK (154 aa). A DNA-binding region spans residues 114 to 176; the sequence is LGIKKALVFY…LYNKKNEWEK (63 aa). The segment at 185–210 is disordered; the sequence is EEASDMVTSQSHSHTHSWGETRTPES. Over residues 190 to 200 the composition is skewed to polar residues; it reads MVTSQSHSHTH.

Forms homodimer. Interacts with NAC071. Expressed in roots and stamens.

The protein localises to the nucleus. In terms of biological role, transcription factor that possesses transactivation activity. Transcription activator involved in response to abiotic stresses. Plays a positive role during dehydration and salt stress. Binds specifically to the 5'-CATGTG-3' motif found in promoters of stress-responsive genes. This Oryza sativa subsp. japonica (Rice) protein is NAC domain-containing protein 2.